A 167-amino-acid chain; its full sequence is UTP pyrophosphatase (167 aa).

It catalyses the reaction UTP + H2O = UMP + diphosphate + H(+). Specifically catalyzes the hydrolysis of UTP to UMP and diphosphate in vitro, albeit at apparently slow rate. Shows no activity towards ATP, GTP, CTP, dTTP and ITP as substrates. This Escherichia coli (strain K12) protein is UTP pyrophosphatase.